Here is a 465-residue protein sequence, read N- to C-terminus: MPETNGTEADSSGPRPGLRLELQAIDLDRDGHGLARWQGWVVVVPGLLPGERAKVQLQQRQKSRWLSRISERLDSSPTRRRPPCILAQDCGGCTLQHLEESAQRNWKQNQLHQTMLRLGGIDHPQAPALTDQRGLGYRNRGLIPLRRGEDDRLRMGYFRRGSHRIVNLSRCPVLDPRLDALVEPLKQDLDTSGLSADHDLSHSQGLRHLGLRIGHHTGEVLITVVSSQQLPALQRLAQQWIERWDPVKGVTLNLQPRRTNQILGATTTVLAGAPTIRELFCGLQLQLSTTTFFQINTPQAERIVACIVSWLSQAELAGPIVDAYCGIGTISLPLAAQGHHVVGLEINPDSIDQARSNADANGLGARTEFQAGDVANLLKETLATCSALVVDPPRRGLESSVIEAILSDPPGLLAYLSCDMATQARDLKRLLQPEGPYRLEQLQPVDFFPQTTHLENLAFLRRVSS.

One can recognise a TRAM domain in the interval 13–71; sequence GPRPGLRLELQAIDLDRDGHGLARWQGWVVVVPGLLPGERAKVQLQQRQKSRWLSRISE. The [4Fe-4S] cluster site is built by cysteine 84, cysteine 90, cysteine 93, and cysteine 171. Residues glutamine 294, tyrosine 324, glutamate 345, and aspartate 391 each coordinate S-adenosyl-L-methionine. Cysteine 418 serves as the catalytic Nucleophile.

The protein belongs to the class I-like SAM-binding methyltransferase superfamily. RNA M5U methyltransferase family.

This is an uncharacterized protein from Parasynechococcus marenigrum (strain WH8102).